The primary structure comprises 197 residues: LexA repressor (197 aa).

The segment at residues 28–47 (VREIARRFRITPRGALLHLI) is a DNA-binding region (H-T-H motif). Catalysis depends on for autocatalytic cleavage activity residues Ser-119 and Lys-156.

Belongs to the peptidase S24 family. In terms of assembly, homodimer.

The catalysed reaction is Hydrolysis of Ala-|-Gly bond in repressor LexA.. Its function is as follows. Represses a number of genes involved in the response to DNA damage (SOS response), including recA and lexA. In the presence of single-stranded DNA, RecA interacts with LexA causing an autocatalytic cleavage which disrupts the DNA-binding part of LexA, leading to derepression of the SOS regulon and eventually DNA repair. This chain is LexA repressor, found in Thermotoga petrophila (strain ATCC BAA-488 / DSM 13995 / JCM 10881 / RKU-1).